The sequence spans 347 residues: Queuosine 5'-phosphate N-glycosylase/hydrolase (347 aa).

Residues His-53, Phe-237, Asp-239, Asp-321, and Asp-326 each contribute to the queuine site. The Nucleophile or transition state stabilizer role is filled by Asp-239.

This sequence belongs to the QNG1 protein family.

It catalyses the reaction queuosine 5'-phosphate + H2O = queuine + D-ribose 5-phosphate. In terms of biological role, catalyzes the hydrolysis of queuosine 5'-phosphate, releasing the nucleobase queuine (q). Is required for salvage of queuine from exogenous queuosine (Q) that is imported and then converted to queuosine 5'-phosphate intracellularly. The sequence is that of Queuosine 5'-phosphate N-glycosylase/hydrolase from Nematostella vectensis (Starlet sea anemone).